A 276-amino-acid polypeptide reads, in one-letter code: Ribosomal RNA small subunit methyltransferase A (276 aa).

S-adenosyl-L-methionine is bound by residues Asn-24, Leu-26, Gly-51, Glu-72, Asp-97, and Asn-118.

The protein belongs to the class I-like SAM-binding methyltransferase superfamily. rRNA adenine N(6)-methyltransferase family. RsmA subfamily.

It localises to the cytoplasm. It catalyses the reaction adenosine(1518)/adenosine(1519) in 16S rRNA + 4 S-adenosyl-L-methionine = N(6)-dimethyladenosine(1518)/N(6)-dimethyladenosine(1519) in 16S rRNA + 4 S-adenosyl-L-homocysteine + 4 H(+). Specifically dimethylates two adjacent adenosines (A1518 and A1519) in the loop of a conserved hairpin near the 3'-end of 16S rRNA in the 30S particle. May play a critical role in biogenesis of 30S subunits. The chain is Ribosomal RNA small subunit methyltransferase A from Clostridium acetobutylicum (strain ATCC 824 / DSM 792 / JCM 1419 / IAM 19013 / LMG 5710 / NBRC 13948 / NRRL B-527 / VKM B-1787 / 2291 / W).